The following is a 431-amino-acid chain: Putative F-box/FBD/LRR-repeat protein At4g26350 (431 aa).

Positions 1-47 (MDIISQCPDHLLLRILSFIPTKDVIVTSLLSKRWGSLWRWVPKLEYD) constitute an F-box domain. LRR repeat units follow at residues 52–78 (NMRF…HLKN), 85–109 (CRTV…EISI), 132–159 (ILTI…HLRC), 160–185 (IGWA…RLAR), and 309–334 (CTQG…TLTN). The FBD domain maps to 348–398 (CWKRPSSVPACLLSSLQAFTWSGYKGRQGDKEVVKYVLRNATGLKKRIFIS).

This is Putative F-box/FBD/LRR-repeat protein At4g26350 from Arabidopsis thaliana (Mouse-ear cress).